Consider the following 269-residue polypeptide: UPF0162 protein BU173 (269 aa).

Belongs to the UPF0162 family.

The polypeptide is UPF0162 protein BU173 (Buchnera aphidicola subsp. Acyrthosiphon pisum (strain APS) (Acyrthosiphon pisum symbiotic bacterium)).